We begin with the raw amino-acid sequence, 221 residues long: Cytidylate kinase (221 aa).

11 to 19 contacts ATP; it reads GPSGVGKST.

It belongs to the cytidylate kinase family. Type 1 subfamily.

It is found in the cytoplasm. The enzyme catalyses CMP + ATP = CDP + ADP. The catalysed reaction is dCMP + ATP = dCDP + ADP. In Mycoplasmopsis pulmonis (strain UAB CTIP) (Mycoplasma pulmonis), this protein is Cytidylate kinase.